The chain runs to 1183 residues: Translation initiation factor IF-2 (1183 aa).

Disordered stretches follow at residues 65-512 (SSKN…KVHI) and 540-579 (LARP…AMEL). Basic and acidic residues predominate over residues 83–99 (TQKDQKTEPKKKNHDQT). The segment covering 100-130 (ELSQAKLNTLLKPSQTLIKSQGSSQANNQKA) has biased composition (polar residues). Over residues 220 to 229 (PKIDIQDKKP) the composition is skewed to basic and acidic residues. Positions 231–270 (QPNNQKAKTRINQGEISPQKVGQGNIQKIKSQNKQNAPSR) are enriched in polar residues. Basic and acidic residues predominate over residues 288-304 (IRKEKPVNKPHTNEVRN). Polar residues-rich tracts occupy residues 321–336 (ANRQ…NNRI) and 357–367 (NRTTQGQNRPG). The span at 485 to 499 (GRPDWDDSAKLDALR) shows a compositional bias: basic and acidic residues. Composition is skewed to basic residues over residues 544-553 (SKPKVGKRNN) and 560-574 (LKKR…RQRR). In terms of domain architecture, tr-type G spans 675–847 (RRPPVVTVMG…VLLVTEVEDL (173 aa)). Positions 684–691 (GHVDHGKT) are G1. 684-691 (GHVDHGKT) is a binding site for GTP. Positions 709-713 (GITQH) are G2. A G3 region spans residues 734-737 (DTPG). GTP-binding positions include 734 to 738 (DTPGH) and 788 to 791 (NKID). The tract at residues 788–791 (NKID) is G4. Residues 824 to 826 (SAI) are G5.

The protein belongs to the TRAFAC class translation factor GTPase superfamily. Classic translation factor GTPase family. IF-2 subfamily.

It is found in the cytoplasm. One of the essential components for the initiation of protein synthesis. Protects formylmethionyl-tRNA from spontaneous hydrolysis and promotes its binding to the 30S ribosomal subunits. Also involved in the hydrolysis of GTP during the formation of the 70S ribosomal complex. The polypeptide is Translation initiation factor IF-2 (Prochlorococcus marinus (strain NATL2A)).